The primary structure comprises 932 residues: Eukaryotic translation initiation factor 3 subunit A (932 aa).

A PCI domain is found at 309–492 (KPATANFVIL…NSISFSSDLF (184 aa)). A phosphoserine mark is found at S374 and S501. Positions 537–862 (LRKQQAEAAY…DEEISRKLAE (326 aa)) form a coiled coil. The segment covering 793 to 865 (AEEEAARAAE…ISRKLAEKAA (73 aa)) has biased composition (basic and acidic residues). The segment at 793 to 932 (AEEEAARAAE…PPSRRNQQQQ (140 aa)) is disordered. 3 positions are modified to phosphoserine: S874, S875, and S877. The span at 877–893 (SPGAWRRGGASAGGVSR) shows a compositional bias: low complexity.

It belongs to the eIF-3 subunit A family. In terms of assembly, component of the eukaryotic translation initiation factor 3 (eIF-3) complex. The eIF-3 complex appears to include tif32/eif3a, SPAC25G10.08/eif3b, tif33/eif3c, SPBC4C3.07/eif3f, tif35/eif3g and sum1/eif3i. This set of common subunits may also associate exclusively with either moe1/eif3d and int6/eif3e, or with SPAC821.05/eif3h and SPAC1751.03/eif3m. The eIF-3 complex may also include SPAC3A12.13c/eif3j.

It localises to the cytoplasm. Functionally, RNA-binding component of the eukaryotic translation initiation factor 3 (eIF-3) complex, which is involved in protein synthesis of a specialized repertoire of mRNAs and, together with other initiation factors, stimulates binding of mRNA and methionyl-tRNAi to the 40S ribosome. The eIF-3 complex specifically targets and initiates translation of a subset of mRNAs involved in cell proliferation. This chain is Eukaryotic translation initiation factor 3 subunit A (tif32), found in Schizosaccharomyces pombe (strain 972 / ATCC 24843) (Fission yeast).